The following is a 150-amino-acid chain: MTKIKIVAVGSLSPKFKSLDEEYAKQVGHFCSLSLSELKEFSEEKNIEVKKEKETKLILDALMPNSKVILLSLKGKQIDSIAFSKLIEMNTNQSFTFIIGGSDGVCEEHFESAQKLSFSQMTFPHQLFRIMLIEQIYRAFMILNNSKYHK.

S-adenosyl-L-methionine-binding positions include leucine 71, glycine 100, and 118–123 (FSQMTF).

This sequence belongs to the RNA methyltransferase RlmH family. As to quaternary structure, homodimer.

Its subcellular location is the cytoplasm. It carries out the reaction pseudouridine(1915) in 23S rRNA + S-adenosyl-L-methionine = N(3)-methylpseudouridine(1915) in 23S rRNA + S-adenosyl-L-homocysteine + H(+). Specifically methylates the pseudouridine at position 1915 (m3Psi1915) in 23S rRNA. This Mycoplasmopsis agalactiae (strain NCTC 10123 / CIP 59.7 / PG2) (Mycoplasma agalactiae) protein is Ribosomal RNA large subunit methyltransferase H.